Consider the following 743-residue polypeptide: NAD(P)H-quinone oxidoreductase subunit 5, chloroplastic (743 aa).

16 helical membrane passes run 9-29 (WIIP…LLLF), 40-60 (WAFQ…NLSI), 89-109 (IDPL…MVLI), 125-145 (FAYM…SNLI), 147-167 (IYIF…FWFT), 185-205 (GDFG…SFEF), 219-239 (NEVN…GAIA), 258-278 (TPIS…FLVA), 284-304 (FIVI…TVFF), 327-347 (LGYM…FHLI), 354-374 (ALLF…VGYC), 396-416 (NSFL…CFWS), 425-445 (WLYS…TAFY), 551-571 (LFPI…GIPF), 607-627 (VFSV…YKPV), and 723-743 (YLFF…FLNL).

It belongs to the complex I subunit 5 family. In terms of assembly, NDH is composed of at least 16 different subunits, 5 of which are encoded in the nucleus.

It localises to the plastid. Its subcellular location is the chloroplast thylakoid membrane. The catalysed reaction is a plastoquinone + NADH + (n+1) H(+)(in) = a plastoquinol + NAD(+) + n H(+)(out). It carries out the reaction a plastoquinone + NADPH + (n+1) H(+)(in) = a plastoquinol + NADP(+) + n H(+)(out). NDH shuttles electrons from NAD(P)H:plastoquinone, via FMN and iron-sulfur (Fe-S) centers, to quinones in the photosynthetic chain and possibly in a chloroplast respiratory chain. The immediate electron acceptor for the enzyme in this species is believed to be plastoquinone. Couples the redox reaction to proton translocation, and thus conserves the redox energy in a proton gradient. This is NAD(P)H-quinone oxidoreductase subunit 5, chloroplastic (ndhF) from Ambrosia trifida (Giant ragweed).